Consider the following 452-residue polypeptide: Isocitrate dehydrogenase [NADP], mitochondrial (452 aa).

The N-terminal 39 residues, 1–39 (MAGYLRAVSSLCRASGSARTWAPAALTVPSWPEQPRRHY), are a transit peptide targeting the mitochondrion. N6-acetyllysine occurs at positions 45, 48, 67, and 69. Residues Lys-80 and Lys-106 each carry the N6-acetyllysine; alternate modification. Residues Lys-80 and Lys-106 each carry the N6-succinyllysine; alternate modification. NADP(+)-binding positions include 115–117 (TIT) and Arg-122. Thr-117 contacts D-threo-isocitrate. D-threo-isocitrate contacts are provided by residues 134-140 (SPNGTIR) and Arg-149. Lys-155 is modified (N6-acetyllysine). Residue Lys-166 is modified to N6-acetyllysine; alternate. N6-succinyllysine; alternate is present on Lys-166. D-threo-isocitrate is bound at residue Arg-172. 2 positions are modified to N6-acetyllysine; alternate: Lys-180 and Lys-193. Residues Lys-180 and Lys-193 each carry the N6-succinyllysine; alternate modification. Lys-199 carries the N6-acetyllysine modification. At Lys-256 the chain carries N6-acetyllysine; alternate. Lys-256 bears the N6-succinyllysine; alternate mark. 4 positions are modified to N6-acetyllysine: Lys-263, Lys-272, Lys-275, and Lys-280. N6-acetyllysine; alternate is present on Lys-282. The residue at position 282 (Lys-282) is an N6-succinyllysine; alternate. Asp-291 lines the Mn(2+) pocket. NADP(+) is bound at residue Lys-299. Mn(2+) is bound at residue Asp-314. NADP(+) contacts are provided by residues 349-354 (GTVTRH) and Asn-367. Position 384 is an N6-acetyllysine; alternate (Lys-384). At Lys-384 the chain carries N6-succinyllysine; alternate. N6-acetyllysine occurs at positions 400, 413, and 442.

Belongs to the isocitrate and isopropylmalate dehydrogenases family. In terms of assembly, homodimer. Requires Mg(2+) as cofactor. The cofactor is Mn(2+). Acetylation at Lys-413 dramatically reduces catalytic activity. Deacetylated by SIRT3. Predominantly expressed in heart, liver and kidney. Expressed in activated B lymphocytes.

The protein localises to the mitochondrion. The catalysed reaction is D-threo-isocitrate + NADP(+) = 2-oxoglutarate + CO2 + NADPH. Functionally, plays a role in intermediary metabolism and energy production. It may tightly associate or interact with the pyruvate dehydrogenase complex. This Mus musculus (Mouse) protein is Isocitrate dehydrogenase [NADP], mitochondrial (Idh2).